The following is a 116-amino-acid chain: Flagellar transcriptional regulator FlhD (116 aa).

It belongs to the FlhD family. In terms of assembly, homodimer; disulfide-linked. Forms a heterohexamer composed of two FlhC and four FlhD subunits. Each FlhC binds a FlhD dimer, forming a heterotrimer, and a hexamer assembles by dimerization of two heterotrimers.

The protein resides in the cytoplasm. In terms of biological role, functions in complex with FlhC as a master transcriptional regulator that regulates transcription of several flagellar and non-flagellar operons by binding to their promoter region. Activates expression of class 2 flagellar genes, including fliA, which is a flagellum-specific sigma factor that turns on the class 3 genes. Also regulates genes whose products function in a variety of physiological pathways. This chain is Flagellar transcriptional regulator FlhD, found in Pectobacterium carotovorum subsp. carotovorum (strain PC1).